We begin with the raw amino-acid sequence, 248 residues long: Mannose-binding protein C (248 aa).

A signal peptide spans 1 to 20; that stretch reads MSPFLSLPLLLLSVLSASYS. The disordered stretch occupies residues 36–112; that stretch reads IACSSPGING…GDSSLAASER (77 aa). The Collagen-like domain maps to 42 to 99; sequence GINGFPGKDGRDGTKGEKGEPGQGLRGLQGPPGKLGPPGNPGPSGSPGAKGQKGDPGA. Position 47 is a 4-hydroxyproline (proline 47). Positions 49–61 are enriched in basic and acidic residues; sequence KDGRDGTKGEKGE. 4-hydroxyproline occurs at positions 73, 79, 82, and 88. Residues 112 to 130 adopt a coiled-coil conformation; that stretch reads RKALQTEMARIKKWVTFSL. In terms of domain architecture, C-type lectin spans 134 to 245; it reads VGKKLFLSNG…CSSSHLAICE (112 aa). 2 disulfides stabilise this stretch: cysteine 155-cysteine 244 and cysteine 222-cysteine 236.

Oligomeric complex of 3 or more homotrimers. Interacts with MASP1 and MASP2. Interacts with MEP1A and MEP1B and may inhibit their catalytic activity. Post-translationally, hydroxylation on proline residues within the sequence motif, GXPG, is most likely to be 4-hydroxy as this fits the requirement for 4-hydroxylation in vertebrates.

The protein resides in the secreted. In terms of biological role, calcium-dependent lectin involved in innate immune defense. Binds mannose, fucose and N-acetylglucosamine on different microorganisms and activates the lectin complement pathway. Binds to late apoptotic cells, as well as to apoptotic blebs and to necrotic cells, but not to early apoptotic cells, facilitating their uptake by macrophages. The polypeptide is Mannose-binding protein C (MBL2) (Saguinus oedipus (Cotton-top tamarin)).